The primary structure comprises 431 residues: Adenylosuccinate synthetase (431 aa).

GTP is bound by residues Gly12–Lys18 and Gly40–Thr42. The Proton acceptor role is filled by Asp13. Mg(2+) contacts are provided by Asp13 and Gly40. IMP is bound by residues Asp13 to Lys16, Asn38 to His41, Thr129, Arg143, Gln224, Thr239, and Arg303. His41 functions as the Proton donor in the catalytic mechanism. Substrate is bound at residue Val299–Arg305. GTP-binding positions include Arg305, Lys331 to Asp333, and Gly413 to Gly415.

The protein belongs to the adenylosuccinate synthetase family. In terms of assembly, homodimer. Mg(2+) is required as a cofactor.

It localises to the cytoplasm. It carries out the reaction IMP + L-aspartate + GTP = N(6)-(1,2-dicarboxyethyl)-AMP + GDP + phosphate + 2 H(+). It functions in the pathway purine metabolism; AMP biosynthesis via de novo pathway; AMP from IMP: step 1/2. Its function is as follows. Plays an important role in the de novo pathway of purine nucleotide biosynthesis. Catalyzes the first committed step in the biosynthesis of AMP from IMP. In Mycobacterium sp. (strain KMS), this protein is Adenylosuccinate synthetase.